The primary structure comprises 891 residues: UPF0182 protein Glov_0814 (891 aa).

7 consecutive transmembrane segments (helical) span residues 6-26, 51-71, 102-122, 164-184, 202-222, 244-264, and 266-286; these read LTPI…LLAY, GIGV…LLYA, IGVL…ALQW, FMLL…GGIA, ILLA…GFGL, TLTT…FGLW, and GTWR…MIGM.

This sequence belongs to the UPF0182 family.

It localises to the cell membrane. The chain is UPF0182 protein Glov_0814 from Trichlorobacter lovleyi (strain ATCC BAA-1151 / DSM 17278 / SZ) (Geobacter lovleyi).